Here is a 321-residue protein sequence, read N- to C-terminus: uncharacterized protein (321 aa).

The Extracellular portion of the chain corresponds to 1 to 6; sequence MDIIRK. A helical transmembrane segment spans residues 7-29; the sequence is ISHFAGQTFGIWVIVFAVLGFSF. At 30-34 the chain is on the cytoplasmic side; the sequence is PSLFT. Residues 35–57 traverse the membrane as a helical segment; the sequence is WISSYITIFLGIIMFGMGLTLQA. Topologically, residues 58-69 are extracellular; sequence DDFKELVRKPWQ. Residues 70–92 traverse the membrane as a helical segment; sequence VIIGVIAQYTIMPLVAFGLAFGL. The Cytoplasmic portion of the chain corresponds to 93-97; that stretch reads HLPAE. A helical transmembrane segment spans residues 98 to 120; the sequence is IAVGVILVGCCPGGTASNVMTFL. The Extracellular portion of the chain corresponds to 121 to 129; sequence AKGNTALSV. A helical transmembrane segment spans residues 130-150; the sequence is AVTTISTLLAPVVTPLLIMLF. At 151–159 the chain is on the cytoplasmic side; the sequence is AKEWLPVSP. Residues 160–180 form a helical membrane-spanning segment; that stretch reads GSLFISILQAVLFPIIAGLIV. Topologically, residues 181 to 190 are extracellular; it reads KMFFRKQVAK. The helical transmembrane segment at 191 to 211 threads the bilayer; it reads AVHALPLVSVIGIVAIVSAVV. Residues 212 to 221 are Cytoplasmic-facing; sequence SGNRENLLQS. A helical membrane pass occupies residues 222-242; it reads GLLIFSVVILHNGIGYLLGFL. Residues 243–267 lie on the Extracellular side of the membrane; the sequence is CAKLLKMDYPSQKAIAIEVGMQNSG. Residues 268 to 288 traverse the membrane as a helical segment; sequence LGAALATAHFSPLSAVPSAIF. The Cytoplasmic portion of the chain corresponds to 289–321; the sequence is SVWHNLSGSMLATYWSKKVKKKQAGSKSSNLSL.

The protein belongs to the bile acid:sodium symporter (BASS) (TC 2.A.28) family.

It localises to the cell membrane. This is an uncharacterized protein from Bacillus subtilis (strain 168).